Here is a 248-residue protein sequence, read N- to C-terminus: Probable transcriptional regulatory protein Dde_2325 (248 aa).

A compositionally biased stretch (basic residues) spans 1–15 (MAGHSKWKNIQHRKG). The segment at 1–22 (MAGHSKWKNIQHRKGRQDAKKS) is disordered.

The protein belongs to the TACO1 family.

Its subcellular location is the cytoplasm. The polypeptide is Probable transcriptional regulatory protein Dde_2325 (Oleidesulfovibrio alaskensis (strain ATCC BAA-1058 / DSM 17464 / G20) (Desulfovibrio alaskensis)).